We begin with the raw amino-acid sequence, 280 residues long: Protein YIP4b (280 aa).

A compositionally biased stretch (polar residues) spans 1-15 (MSHNDTIPLYQSSQS). Positions 1-106 (MSHNDTIPLY…SGFGSPPNTL (106 aa)) are disordered. Topologically, residues 1 to 146 (MSHNDTIPLY…DPGKALRDWD (146 aa)) are cytoplasmic. Residues 147 to 167 (LWGPFFFIVFLGLTLSWSASV) form a helical membrane-spanning segment. At 168-171 (KKSE) the chain is on the lumenal side. The next 2 helical transmembrane spans lie at 172–192 (VFAV…LNVL) and 193–213 (LLGG…CLFP). Residues 214 to 230 (LDVGAVICMLKDNVILK) lie on the Lumenal side of the membrane. The chain crosses the membrane as a helical span at residues 231-251 (MVVVSVTLAWSSWAAYPFMSA). Residues 252 to 258 (AVNPRRK) are Cytoplasmic-facing. Residues 259-279 (ALALYPVFLMYVSVGFLIIAI) form a helical membrane-spanning segment. Residue Asn280 is a topological domain, lumenal.

It belongs to the YIP1 family. As to quaternary structure, homodimer and heterodimer with YIP4A. Component of a trans-Golgi network (TGN)-localized ECH/YIP4 complex made of ECH, YIP4A and YIP4B. Interacts directly with ECH. Expressed in developing root hair cells.

It is found in the golgi apparatus. The protein localises to the trans-Golgi network membrane. In terms of biological role, together with YIP4A, involved in the regulation of cell elongation during root and hypocotyl growth. YIP4A and YIP4B are central trafficking components in Rho-of-plant (ROPs, e.g. ARAC4/ROP2, ARAC5/ROP4 and ARAC3/ROP6) small GTPases-dependent root hair formation, thus contributing to activation and plasma membrane accumulation of ROPs during hair initiation. The ECH/YIP4 complex is involved in the modulation of the trans-Golgi network (TGN)-mediated trafficking of some proteins and cell wall components (e.g. pectin and hemicellulose) to the cell wall in dark-grown hypocotyls and in secretory cells of the seed coat. This Arabidopsis thaliana (Mouse-ear cress) protein is Protein YIP4b.